We begin with the raw amino-acid sequence, 93 residues long: MEPVDPELEPWNHPGSQPKTACNNCHCKVCCYHCVYCFTKKGLGISYGRKKRSQRRRTPQSNKSHQDPLPKQPLSQRLGDQTGQKEQKKTLES.

An interaction with human CREBBP region spans residues 1–24 (MEPVDPELEPWNHPGSQPKTACNN). A transactivation region spans residues 1-48 (MEPVDPELEPWNHPGSQPKTACNNCHCKVCCYHCVYCFTKKGLGISYG). Residues C22, C25, and C27 each coordinate Zn(2+). Positions 22–37 (CNNCHCKVCCYHCVYC) are cysteine-rich. The residue at position 28 (K28) is an N6-acetyllysine; by host PCAF. Zn(2+)-binding residues include C30, H33, C34, and C37. The core stretch occupies residues 38-48 (FTKKGLGISYG). A compositionally biased stretch (basic residues) spans 48–58 (GRKKRSQRRRT). Positions 48–93 (GRKKRSQRRRTPQSNKSHQDPLPKQPLSQRLGDQTGQKEQKKTLES) are disordered. Positions 49 to 57 (RKKRSQRRR) match the Nuclear localization signal, RNA-binding (TAR), and protein transduction motif. The interaction with the host capping enzyme RNGTT stretch occupies residues 49-86 (RKKRSQRRRTPQSNKSHQDPLPKQPLSQRLGDQTGQKE). N6-acetyllysine; by host EP300 and GCN5L2 occurs at positions 50 and 51. R52 bears the Asymmetric dimethylarginine; by host PRMT6 mark. K71 is covalently cross-linked (Glycyl lysine isopeptide (Lys-Gly) (interchain with G-Cter in ubiquitin)). Over residues 73–82 (PLSQRLGDQT) the composition is skewed to polar residues. Residues 83–93 (GQKEQKKTLES) are compositionally biased toward basic and acidic residues.

It belongs to the lentiviruses Tat family. In terms of assembly, interacts with host CCNT1. Associates with the P-TEFb complex composed at least of Tat, P-TEFb (CDK9 and CCNT1), TAR RNA, RNA Pol II. Recruits the HATs CREBBP, TAF1/TFIID, EP300, PCAF and GCN5L2. Interacts with host KAT5/Tip60; this interaction targets the latter to degradation. Interacts with the host deacetylase SIRT1. Interacts with host capping enzyme RNGTT; this interaction stimulates RNGTT. Binds to host KDR, and to the host integrins ITGAV/ITGB3 and ITGA5/ITGB1. Interacts with host KPNB1/importin beta-1 without previous binding to KPNA1/importin alpha-1. Interacts with EIF2AK2. Interacts with host nucleosome assembly protein NAP1L1; this interaction may be required for the transport of Tat within the nucleus, since the two proteins interact at the nuclear rim. Interacts with host C1QBP/SF2P32; this interaction involves lysine-acetylated Tat. Interacts with the host chemokine receptors CCR2, CCR3 and CXCR4. Interacts with host DPP4/CD26; this interaction may trigger an anti-proliferative effect. Interacts with host LDLR. Interacts with the host extracellular matrix metalloproteinase MMP1. Interacts with host PRMT6; this interaction mediates Tat's methylation. Interacts with, and is ubiquitinated by MDM2/Hdm2. Interacts with host PSMC3 and HTATIP2. Interacts with STAB1; this interaction may overcome SATB1-mediated repression of IL2 and IL2RA (interleukin) in T cells by binding to the same domain than HDAC1. Interacts (when acetylated) with human CDK13, thereby increasing HIV-1 mRNA splicing and promoting the production of the doubly spliced HIV-1 protein Nef. Interacts with host TBP; this interaction modulates the activity of transcriptional pre-initiation complex. Interacts with host RELA. In terms of processing, asymmetrical arginine methylation by host PRMT6 seems to diminish the transactivation capacity of Tat and affects the interaction with host CCNT1. Acetylation by EP300, CREBBP, GCN5L2/GCN5 and PCAF regulates the transactivation activity of Tat. EP300-mediated acetylation of Lys-50 promotes dissociation of Tat from the TAR RNA through the competitive binding to PCAF's bromodomain. In addition, the non-acetylated Tat's N-terminus can also interact with PCAF. PCAF-mediated acetylation of Lys-28 enhances Tat's binding to CCNT1. Lys-50 is deacetylated by SIRT1. Post-translationally, polyubiquitination by host MDM2 does not target Tat to degradation, but activates its transactivation function and fosters interaction with CCNT1 and TAR RNA. In terms of processing, phosphorylated by EIF2AK2 on serine and threonine residues adjacent to the basic region important for TAR RNA binding and function. Phosphorylation of Tat by EIF2AK2 is dependent on the prior activation of EIF2AK2 by dsRNA.

The protein resides in the host nucleus. The protein localises to the host nucleolus. Its subcellular location is the host cytoplasm. It localises to the secreted. Functionally, transcriptional activator that increases RNA Pol II processivity, thereby increasing the level of full-length viral transcripts. Recognizes a hairpin structure at the 5'-LTR of the nascent viral mRNAs referred to as the transactivation responsive RNA element (TAR) and recruits the cyclin T1-CDK9 complex (P-TEFb complex) that will in turn hyperphosphorylate the RNA polymerase II to allow efficient elongation. The CDK9 component of P-TEFb and other Tat-activated kinases hyperphosphorylate the C-terminus of RNA Pol II that becomes stabilized and much more processive. Other factors such as HTATSF1/Tat-SF1, SUPT5H/SPT5, and HTATIP2 are also important for Tat's function. Besides its effect on RNA Pol II processivity, Tat induces chromatin remodeling of proviral genes by recruiting the histone acetyltransferases (HATs) CREBBP, EP300 and PCAF to the chromatin. This also contributes to the increase in proviral transcription rate, especially when the provirus integrates in transcriptionally silent region of the host genome. To ensure maximal activation of the LTR, Tat mediates nuclear translocation of NF-kappa-B by interacting with host RELA. Through its interaction with host TBP, Tat may also modulate transcription initiation. Tat can reactivate a latently infected cell by penetrating in it and transactivating its LTR promoter. In the cytoplasm, Tat is thought to act as a translational activator of HIV-1 mRNAs. In terms of biological role, extracellular circulating Tat can be endocytosed by surrounding uninfected cells via the binding to several surface receptors such as CD26, CXCR4, heparan sulfate proteoglycans (HSPG) or LDLR. Neurons are rarely infected, but they internalize Tat via their LDLR. Through its interaction with nuclear HATs, Tat is potentially able to control the acetylation-dependent cellular gene expression. Modulates the expression of many cellular genes involved in cell survival, proliferation or in coding for cytokines or cytokine receptors. Tat plays a role in T-cell and neurons apoptosis. Tat induced neurotoxicity and apoptosis probably contribute to neuroAIDS. Circulating Tat also acts as a chemokine-like and/or growth factor-like molecule that binds to specific receptors on the surface of the cells, affecting many cellular pathways. In the vascular system, Tat binds to ITGAV/ITGB3 and ITGA5/ITGB1 integrins dimers at the surface of endothelial cells and competes with bFGF for heparin-binding sites, leading to an excess of soluble bFGF. This Pan troglodytes (Chimpanzee) protein is Protein Tat.